The primary structure comprises 133 residues: Small ribosomal subunit protein uS19 (133 aa).

Belongs to the universal ribosomal protein uS19 family.

In terms of biological role, protein S19 forms a complex with S13 that binds strongly to the 16S ribosomal RNA. This chain is Small ribosomal subunit protein uS19, found in Thermococcus onnurineus (strain NA1).